The sequence spans 69 residues: FMRFamide-like neuropeptides 24 (69 aa).

The N-terminal stretch at 1–25 (MLSSRTSSIILILAILVAIMAVAQC) is a signal peptide. A propeptide spanning residues 26 to 51 (RNIQYDVEEMTPEAAFRYAQWGEIPH) is cleaved from the precursor. The residue at position 64 (Phe-64) is a Phenylalanine amide. A propeptide spanning residues 68–69 (SI) is cleaved from the precursor.

This sequence belongs to the FARP (FMRFamide related peptide) family.

It is found in the secreted. Its function is as follows. Probable FMRFamide-like neuropeptides. Plays a role in behaviors associated with a sleep-like state induced by stress (SIS), acting in concert with the FMRFamide related peptide flp-13 and neuropeptide-like protein nlp-8. This chain is FMRFamide-like neuropeptides 24, found in Caenorhabditis elegans.